The chain runs to 173 residues: Alpha-crystallin A chain (173 aa).

The residue at position 1 (methionine 1) is an N-acetylmethionine. The required for complex formation with BFSP1 and BFSP2 stretch occupies residues 1–63; the sequence is MDVTIQHPWF…RTVLDSGISE (63 aa). Deamidated glutamine; partial is present on glutamine 6. Serine 45 is modified (phosphoserine). Glutamine 50 bears the Deamidated glutamine; partial mark. One can recognise a sHSP domain in the interval 52–162; it reads LFRTVLDSGI…GPSERAIPVS (111 aa). N6-acetyllysine occurs at positions 70 and 99. Zn(2+) contacts are provided by histidine 100, glutamate 102, and histidine 107. A disordered region spans residues 145–173; it reads KVASGLDAGPSERAIPVSREEKPSSAPSS. O-linked (GlcNAc) serine glycosylation is present at serine 162.

Belongs to the small heat shock protein (HSP20) family. As to quaternary structure, heteromer composed of three CRYAA and one CRYAB subunits. Zinc coordination is achieved at least by His-100, Glu-102 and His-107. His-100 and Glu-102 come from the same molecule within the oligomer, while His-107 residue is provided by another molecule. Inter-subunit bridging via zinc ions enhances stability, which is crucial as there is no protein turn over in the lens. Can also form homodimers and homotetramers (dimers of dimers) which serve as the building blocks of homooligomers. Part of a complex required for lens intermediate filament formation composed of BFSP1, BFSP2 and CRYAA. Post-translationally, acetylation at Lys-70 may increase chaperone activity. Undergoes age-dependent proteolytical cleavage at the C-terminus.

It localises to the cytoplasm. The protein localises to the nucleus. Functionally, contributes to the transparency and refractive index of the lens. Acts as a chaperone, preventing aggregation of various proteins under a wide range of stress conditions. Required for the correct formation of lens intermediate filaments as part of a complex composed of BFSP1, BFSP2 and CRYAA. The polypeptide is Alpha-crystallin A chain (CRYAA) (Erinaceus europaeus (Western European hedgehog)).